The sequence spans 210 residues: Redox-sensing transcriptional repressor Rex (210 aa).

The segment at residues 17 to 56 (KYHRYLNELMKNDVDRISSKELGEKIGFTASQIRQDLNCF) is a DNA-binding region (H-T-H motif). 91 to 96 (GAGNIG) lines the NAD(+) pocket.

Belongs to the transcriptional regulatory Rex family. In terms of assembly, homodimer.

Its subcellular location is the cytoplasm. Modulates transcription in response to changes in cellular NADH/NAD(+) redox state. This is Redox-sensing transcriptional repressor Rex from Clostridium botulinum (strain Alaska E43 / Type E3).